Reading from the N-terminus, the 171-residue chain is SPbeta prophage-derived uncharacterized protein YokC (171 aa).

The protein is SPbeta prophage-derived uncharacterized protein YokC (yokC) of Bacillus subtilis (strain 168).